Here is a 155-residue protein sequence, read N- to C-terminus: 3-hydroxyacyl-[acyl-carrier-protein] dehydratase FabZ (155 aa).

Residue H57 is part of the active site.

It belongs to the thioester dehydratase family. FabZ subfamily.

It is found in the cytoplasm. The catalysed reaction is a (3R)-hydroxyacyl-[ACP] = a (2E)-enoyl-[ACP] + H2O. Involved in unsaturated fatty acids biosynthesis. Catalyzes the dehydration of short chain beta-hydroxyacyl-ACPs and long chain saturated and unsaturated beta-hydroxyacyl-ACPs. The sequence is that of 3-hydroxyacyl-[acyl-carrier-protein] dehydratase FabZ from Cereibacter sphaeroides (strain KD131 / KCTC 12085) (Rhodobacter sphaeroides).